The sequence spans 276 residues: uncharacterized protein (276 aa).

Residues 1–29 (MKSHVRSFKTYIRDEIIKKGGWVNAHAHA) form the signal peptide.

Belongs to the metallo-dependent hydrolases superfamily.

This is an uncharacterized protein from Haemophilus influenzae (strain ATCC 51907 / DSM 11121 / KW20 / Rd).